A 300-amino-acid chain; its full sequence is GTPase Era (300 aa).

An Era-type G domain is found at 4–173 (KYGIVAIVGK…INTIKNYLHK (170 aa)). The segment at 12 to 19 (GKPNVGKS) is G1. 12-19 (GKPNVGKS) is a binding site for GTP. The interval 38–42 (QTTRN) is G2. Positions 59 to 62 (DTPG) are G3. GTP is bound by residues 59 to 63 (DTPGF) and 122 to 125 (SKAE). Residues 122–125 (SKAE) are G4. A G5 region spans residues 152–154 (ISA). The KH type-2 domain maps to 204–282 (LNHEVPHGVG…SLTIFVKVEN (79 aa)).

It belongs to the TRAFAC class TrmE-Era-EngA-EngB-Septin-like GTPase superfamily. Era GTPase family. Monomer.

The protein localises to the cytoplasm. Its subcellular location is the cell membrane. In terms of biological role, an essential GTPase that binds both GDP and GTP, with rapid nucleotide exchange. Plays a role in 16S rRNA processing and 30S ribosomal subunit biogenesis and possibly also in cell cycle regulation and energy metabolism. This chain is GTPase Era, found in Ureaplasma parvum serovar 3 (strain ATCC 27815 / 27 / NCTC 11736).